The sequence spans 155 residues: Large ribosomal subunit protein uL15 (155 aa).

Positions 1–63 (MKLHELAPNP…QMPLTRRLPK (63 aa)) are disordered. 2 stretches are compositionally biased toward gly residues: residues 21–31 (RGIGSGLGKTS) and 42–52 (SGGGVRPGFEG).

The protein belongs to the universal ribosomal protein uL15 family. Part of the 50S ribosomal subunit.

Functionally, binds to the 23S rRNA. The chain is Large ribosomal subunit protein uL15 from Symbiobacterium thermophilum (strain DSM 24528 / JCM 14929 / IAM 14863 / T).